The following is a 458-amino-acid chain: V-type ATP synthase beta chain (458 aa).

The protein belongs to the ATPase alpha/beta chains family.

In terms of biological role, produces ATP from ADP in the presence of a proton gradient across the membrane. The V-type beta chain is a regulatory subunit. In Fusobacterium nucleatum subsp. nucleatum (strain ATCC 25586 / DSM 15643 / BCRC 10681 / CIP 101130 / JCM 8532 / KCTC 2640 / LMG 13131 / VPI 4355), this protein is V-type ATP synthase beta chain.